A 138-amino-acid chain; its full sequence is Ribulose bisphosphate carboxylase small subunit (138 aa).

It belongs to the RuBisCO small chain family. In terms of assembly, heterohexadecamer of 8 large and 8 small subunits.

The protein localises to the plastid. It localises to the chloroplast. RuBisCO catalyzes two reactions: the carboxylation of D-ribulose 1,5-bisphosphate, the primary event in carbon dioxide fixation, as well as the oxidative fragmentation of the pentose substrate in the photorespiration process. Both reactions occur simultaneously and in competition at the same active site. Although the small subunit is not catalytic it is essential for maximal activity. The protein is Ribulose bisphosphate carboxylase small subunit of Pyropia suborbiculata (Red alga).